We begin with the raw amino-acid sequence, 1072 residues long: Carbamoyl phosphate synthase large chain (1072 aa).

The interval 1–401 is carboxyphosphate synthetic domain; sequence MPKRLDINTI…SLLKAVRSLE (401 aa). Positions 129, 169, 175, 176, 208, 210, 215, 241, 242, 243, 284, and 298 each coordinate ATP. Residues 133-327 form the ATP-grasp 1 domain; the sequence is RTLMQDLNEP…IAKLAAKIAV (195 aa). Residues Q284, E298, and N300 each coordinate Mg(2+). Residues Q284, E298, and N300 each contribute to the Mn(2+) site. The oligomerization domain stretch occupies residues 402–546; the sequence is LGIYHLELDH…YSTYADENES (145 aa). The segment at 547–929 is carbamoyl phosphate synthetic domain; that stretch reads IVTDRKSVVV…ALYKGLVASG (383 aa). One can recognise an ATP-grasp 2 domain in the interval 671 to 861; it reads EAALTKLGIP…MANVATKVIL (191 aa). R707, R746, E752, G777, V778, H779, S780, Q820, and E832 together coordinate ATP. Mg(2+)-binding residues include Q820, E832, and N834. Residues Q820, E832, and N834 each coordinate Mn(2+). The region spanning 930–1072 is the MGS-like domain; that stretch reads INIPTHGSVI…QTKRHEVVHA (143 aa). The interval 930 to 1072 is allosteric domain; it reads INIPTHGSVI…QTKRHEVVHA (143 aa).

It belongs to the CarB family. In terms of assembly, composed of two chains; the small (or glutamine) chain promotes the hydrolysis of glutamine to ammonia, which is used by the large (or ammonia) chain to synthesize carbamoyl phosphate. Tetramer of heterodimers (alpha,beta)4. Mg(2+) serves as cofactor. Requires Mn(2+) as cofactor.

The enzyme catalyses hydrogencarbonate + L-glutamine + 2 ATP + H2O = carbamoyl phosphate + L-glutamate + 2 ADP + phosphate + 2 H(+). The catalysed reaction is hydrogencarbonate + NH4(+) + 2 ATP = carbamoyl phosphate + 2 ADP + phosphate + 2 H(+). The protein operates within amino-acid biosynthesis; L-arginine biosynthesis; carbamoyl phosphate from bicarbonate: step 1/1. It participates in pyrimidine metabolism; UMP biosynthesis via de novo pathway; (S)-dihydroorotate from bicarbonate: step 1/3. Large subunit of the glutamine-dependent carbamoyl phosphate synthetase (CPSase). CPSase catalyzes the formation of carbamoyl phosphate from the ammonia moiety of glutamine, carbonate, and phosphate donated by ATP, constituting the first step of 2 biosynthetic pathways, one leading to arginine and/or urea and the other to pyrimidine nucleotides. The large subunit (synthetase) binds the substrates ammonia (free or transferred from glutamine from the small subunit), hydrogencarbonate and ATP and carries out an ATP-coupled ligase reaction, activating hydrogencarbonate by forming carboxy phosphate which reacts with ammonia to form carbamoyl phosphate. The protein is Carbamoyl phosphate synthase large chain of Bacillus cereus (strain B4264).